The following is a 724-amino-acid chain: Protein BCH1 (724 aa).

The segment covering 51–65 has biased composition (low complexity); that stretch reads TTATASANDNGATSN. Positions 51-71 are disordered; sequence TTATASANDNGATSNINGQDP. The tract at residues 711–724 is CHS5-binding; sequence LNFLKNFTNDTFDN.

Belongs to the CHAPS family. As to quaternary structure, component of the CHS5/6 complex composed of the 4 CHAPS proteins BCH1, BCH2, BUD7, and CHS6 as well as at least CHS5 and GTP-bound ARF1. The complex interacts with the cargo protein CHS3.

It localises to the golgi apparatus. Its subcellular location is the trans-Golgi network membrane. Its function is as follows. Member of the CHS5-ARF1P-binding proteins (CHAPS) which mediates export of specific cargo proteins, including chitin synthase CHS3. In Saccharomyces cerevisiae (strain ATCC 204508 / S288c) (Baker's yeast), this protein is Protein BCH1 (BCH1).